The primary structure comprises 148 residues: SsrA-binding protein (148 aa).

Residues 127 to 142 (KRESEKERDWERDKAR) are compositionally biased toward basic and acidic residues. The tract at residues 127-148 (KRESEKERDWERDKARLMRVKT) is disordered.

Belongs to the SmpB family.

It is found in the cytoplasm. Functionally, required for rescue of stalled ribosomes mediated by trans-translation. Binds to transfer-messenger RNA (tmRNA), required for stable association of tmRNA with ribosomes. tmRNA and SmpB together mimic tRNA shape, replacing the anticodon stem-loop with SmpB. tmRNA is encoded by the ssrA gene; the 2 termini fold to resemble tRNA(Ala) and it encodes a 'tag peptide', a short internal open reading frame. During trans-translation Ala-aminoacylated tmRNA acts like a tRNA, entering the A-site of stalled ribosomes, displacing the stalled mRNA. The ribosome then switches to translate the ORF on the tmRNA; the nascent peptide is terminated with the 'tag peptide' encoded by the tmRNA and targeted for degradation. The ribosome is freed to recommence translation, which seems to be the essential function of trans-translation. The chain is SsrA-binding protein from Aromatoleum aromaticum (strain DSM 19018 / LMG 30748 / EbN1) (Azoarcus sp. (strain EbN1)).